The primary structure comprises 214 residues: Rac-like GTP-binding protein 1 (214 aa).

GTP contacts are provided by residues 17–24, 20–25, Thr-42, 64–68, Gly-67, 122–125, 123–125, and 164–165; these read GDGAVGKT, AVGKTC, DTAGQ, TKLD, KLD, and SK. Residues 39-47 carry the Effector region motif; that stretch reads YIPTVFDNF.

It belongs to the small GTPase superfamily. Rho family. May interact with MPK1/MAPK6. Binds to RBOHB, preferentially in the GTP-bound form. Interacts with CCR1 in a GTP-dependent manner. In terms of processing, may be palmitoylated.

It is found in the cytoplasm. The protein localises to the membrane. In terms of biological role, small GTPase playing a general role in disease resistance signaling pathway. Acts downstream of heterotrimeric G protein alpha subunit. Regulates cell death and reactive oxygen species production, probably through NADPH oxidase. Also involved in sphingolipid elicitor (SE)-dependent defense signaling. Activates phytoalexin production and alters defense-related genes. Down-regulates metallothionein 2b, a reactive oxygen scavenger. May control lignin synthesis through regulation of both NADPH oxidase and CCR1 activities during defense responses. Stimulates lignin synthesis in suspension cell culture. The sequence is that of Rac-like GTP-binding protein 1 (RAC1) from Oryza sativa subsp. japonica (Rice).